The chain runs to 476 residues: GTPase Der (476 aa).

2 EngA-type G domains span residues 3-167 (FTVA…GEDM) and 205-380 (LRVA…KTWN). Residues 9–16 (GRPNVGKS), 56–60 (DTAGL), 119–122 (NKSE), 211–218 (GRPNAGKS), 258–262 (DTAGM), and 323–326 (NKWD) each bind GTP. In terms of domain architecture, KH-like spans 381–465 (RRISTAKLNR…PIRVHYRGSD (85 aa)).

It belongs to the TRAFAC class TrmE-Era-EngA-EngB-Septin-like GTPase superfamily. EngA (Der) GTPase family. In terms of assembly, associates with the 50S ribosomal subunit.

Functionally, GTPase that plays an essential role in the late steps of ribosome biogenesis. The polypeptide is GTPase Der (Agrobacterium fabrum (strain C58 / ATCC 33970) (Agrobacterium tumefaciens (strain C58))).